The primary structure comprises 463 residues: MDITLVKSLYRETEKHMDKEVKINGWVRTVRDSKNFAFVEVNDGSFFKNVQVILESSLENFKELCKMPISTSVEVEGIVQPTPNAKQPFEIKATRISIEGKSSTDYPLQKKRHTFEYLRTIAHLRPRSNAFSAVFRVRSLAAYAVHKFFQERGFVYTNTPIITGSDCEGAGEMFQLTTMDLNNIPKTEEGKIDFSKDFFGSPANLTVSGQLSAETFALAFRNVYTFGPTFRAENSNTARHASEFWMIEPEMAFAELTDYLDNAEDMVKFVINYVMENAPEEMAFFNSFVDKGLFDRLDNVVNSDFKRITYTEAVELLQKSGVKFDYEVEWGIDLQTEHERYLTEQIFKKPVFVTDYPKDIKAFYMRLNDDGKTVAAADLLVPGVGEIIGGSQREERLDVLEKRMEELNLNKEDYWWYLELRKYGETKHSGYGLGFERILMYITGMTNIRDVIPFPRTPGSAEF.

Belongs to the class-II aminoacyl-tRNA synthetase family. In terms of assembly, homodimer.

It localises to the cytoplasm. The enzyme catalyses tRNA(Asn) + L-asparagine + ATP = L-asparaginyl-tRNA(Asn) + AMP + diphosphate + H(+). The chain is Asparagine--tRNA ligase from Clostridium botulinum (strain ATCC 19397 / Type A).